The sequence spans 303 residues: 2-dehydropantoate 2-reductase (303 aa).

NADP(+) is bound by residues 7–12, Asn98, and Ala122; that span reads GCGALG. Residue Asn98 coordinates substrate. The Proton donor role is filled by Lys176. The substrate site is built by Asn180, Asn184, Asn194, and Ser244. Glu256 lines the NADP(+) pocket.

It belongs to the ketopantoate reductase family. In terms of assembly, monomer.

The protein resides in the cytoplasm. It carries out the reaction (R)-pantoate + NADP(+) = 2-dehydropantoate + NADPH + H(+). Its pathway is cofactor biosynthesis; (R)-pantothenate biosynthesis; (R)-pantoate from 3-methyl-2-oxobutanoate: step 2/2. Functionally, catalyzes the NADPH-dependent reduction of ketopantoate into pantoic acid. This is 2-dehydropantoate 2-reductase (panE) from Escherichia coli O157:H7.